A 172-amino-acid chain; its full sequence is Xanthine-guanine phosphoribosyltransferase (172 aa).

5-phospho-alpha-D-ribose 1-diphosphate is bound by residues 47–48 and 106–114; these read RG and DDLVDTGKT. Aspartate 107 contributes to the Mg(2+) binding site. Positions 110 and 153 each coordinate guanine. 2 residues coordinate xanthine: aspartate 110 and isoleucine 153. GMP is bound by residues 110–114 and 152–153; these read DTGKT and WI.

This sequence belongs to the purine/pyrimidine phosphoribosyltransferase family. XGPT subfamily. Homotetramer. The cofactor is Mg(2+).

The protein localises to the cell inner membrane. The enzyme catalyses GMP + diphosphate = guanine + 5-phospho-alpha-D-ribose 1-diphosphate. It catalyses the reaction XMP + diphosphate = xanthine + 5-phospho-alpha-D-ribose 1-diphosphate. The catalysed reaction is IMP + diphosphate = hypoxanthine + 5-phospho-alpha-D-ribose 1-diphosphate. Its pathway is purine metabolism; GMP biosynthesis via salvage pathway; GMP from guanine: step 1/1. It participates in purine metabolism; XMP biosynthesis via salvage pathway; XMP from xanthine: step 1/1. In terms of biological role, purine salvage pathway enzyme that catalyzes the transfer of the ribosyl-5-phosphate group from 5-phospho-alpha-D-ribose 1-diphosphate (PRPP) to the N9 position of the 6-oxopurines guanine and xanthine to form the corresponding ribonucleotides GMP (guanosine 5'-monophosphate) and XMP (xanthosine 5'-monophosphate), with the release of PPi. To a lesser extent, also acts on hypoxanthine. The polypeptide is Xanthine-guanine phosphoribosyltransferase (Rhodopseudomonas palustris (strain HaA2)).